Reading from the N-terminus, the 347-residue chain is D-alanine--D-alanine ligase (347 aa).

Residues 131 to 333 (KRVLESAGIA…YPELIERLVD (203 aa)) enclose the ATP-grasp domain. 161-216 (EEKLAYPVFTKPSNMGSSVGISKSENQEELRQALKLAFRYDSRVLVEQGVNAREIE) serves as a coordination point for ATP. Residues Asp287, Glu300, and Asn302 each coordinate Mg(2+).

Belongs to the D-alanine--D-alanine ligase family. It depends on Mg(2+) as a cofactor. The cofactor is Mn(2+).

The protein localises to the cytoplasm. It catalyses the reaction 2 D-alanine + ATP = D-alanyl-D-alanine + ADP + phosphate + H(+). Its pathway is cell wall biogenesis; peptidoglycan biosynthesis. Cell wall formation. This chain is D-alanine--D-alanine ligase, found in Streptococcus pneumoniae (strain ATCC BAA-255 / R6).